The following is a 250-amino-acid chain: MPRYLEGWIKDVVENAKRRPYVSRSREKPVLQIIPRIRAVKGAGLNPVIAEYKRKSPSGFSEDRDPISYAKSMEQGGAVAISVITENTVFGGSYEYLERIARNVKIPLLMKDFVVSENQVDTAYDLGADFVLLIVRILTERELSGLLEYVRSYGMEALVEVHDREDLDIALRSGASLIGVNSRDLFSLTIQKEMAMKLLEQIPSTVTKVAESGIESAEEIRLLREKGADAFLIGSSLMRNPDKIKEFVQG.

This sequence belongs to the TrpC family.

The catalysed reaction is 1-(2-carboxyphenylamino)-1-deoxy-D-ribulose 5-phosphate + H(+) = (1S,2R)-1-C-(indol-3-yl)glycerol 3-phosphate + CO2 + H2O. It functions in the pathway amino-acid biosynthesis; L-tryptophan biosynthesis; L-tryptophan from chorismate: step 4/5. This Metallosphaera sedula (strain ATCC 51363 / DSM 5348 / JCM 9185 / NBRC 15509 / TH2) protein is Indole-3-glycerol phosphate synthase.